The sequence spans 7785 residues: Probable non-canonical nonribosomal peptide synthetase (NRPS) CymA (7785 aa).

3 consecutive Carrier domains span residues 487 to 562 (TARS…QRQE), 1908 to 1983 (HART…SEQQ), and 2958 to 3033 (SPGM…LEGG). O-(pantetheine 4'-phosphoryl)serine is present on residues Ser522, Ser1943, and Ser2993. Residues 3088–3111 (RLALADVVVRHEALRTVFAERAGN) form an LRR 1 repeat. 3 Carrier domains span residues 3978–4053 (APRT…SEQQ), 5002–5077 (EPRT…LEAN), and 6389–6464 (GPRD…AQGS). Ser4013, Ser5037, and Ser6424 each carry O-(pantetheine 4'-phosphoryl)serine. Residues 6853 to 6875 (TGVSRVDLSVNAIETFDDHGLPA) form an LRR 2 repeat. A Carrier 7 domain is found at 7432–7507 (GPRTPQEEIL…QLAEQLGSDG (76 aa)). At Ser7467 the chain carries O-(pantetheine 4'-phosphoryl)serine.

Pantetheine 4'-phosphate serves as cofactor.

In terms of biological role, probable non-canonical nonribosomal peptide synthetase (NRPS); part of the gene cluster that mediates the biosynthesis of cyclic heptapeptides, known as cyclomarins and also of cyclic dipeptides, called cyclomarazines, which have both antimicrobial and cytotoxic effects. First, CymD catalyzes the reverse N-prenylation of monomeric L-tryptophan with dimethylallyl diphosphate (DMAPP) to form N-(1,1-dimethylallyl)-tryptophan (r-N-DMAT). The N-(1,1-dimethylallyl)-tryptophan produced by CymD is then combined with a range of standard and nonproteinogenic amino acid substrates to synthesize the peptides, a process that is probably catalyzed by the non-canonical nonribosomal peptide synthetase (NRPS), CymA. Other proteins in the cluster catalyze further modifications of the peptides including CymV which catalyzes the oxidation of olefinic cyclomarins and cyclomarazines to their respective epoxide derivatives. In Salinispora arenicola (strain CNS-205), this protein is Probable non-canonical nonribosomal peptide synthetase (NRPS) CymA.